Reading from the N-terminus, the 295-residue chain is Cyclin-G1 (295 aa).

The protein belongs to the cyclin family. Cyclin G subfamily.

It is found in the nucleus. In terms of biological role, may play a role in growth regulation. Is associated with G2/M phase arrest in response to DNA damage. May be an intermediate by which p53 mediates its role as an inhibitor of cellular proliferation. This is Cyclin-G1 (CCNG1) from Pongo abelii (Sumatran orangutan).